A 497-amino-acid polypeptide reads, in one-letter code: Serine/threonine-protein phosphatase 2A 56 kDa regulatory subunit beta isoform (497 aa).

A compositionally biased stretch (low complexity) spans Met1–Leu19. Disordered stretches follow at residues Met1–Asn55 and Gln473–Ser497. 6 positions are modified to phosphoserine: Ser32, Ser35, Ser44, Ser46, Ser47, and Ser48. Positions Arg34–His45 are enriched in basic residues.

Belongs to the phosphatase 2A regulatory subunit B56 family. As to quaternary structure, component of the serine/threonine-protein phosphatase 2A complex (PP2A). This complex consists of a common heterodimeric core enzyme, composed of a 36 kDa catalytic subunit (subunit C) and a 65 kDa constant scaffold subunit (PR65 or subunit A), that associates with a variety of regulatory subunits. Proteins that associate with the core dimer include three families of regulatory subunits B (the R2/B/PR55/B55, R3/B''/PR72/PR130/PR59 and R5/B'/B56 families), the 48 kDa variable regulatory subunit, viral proteins, and cell signaling molecules. Interacts with SGO1. Interacts with AKT1. Ubiquitinated by CUL3-KLHL15 complex; this modification leads to proteasomal degradation.

It localises to the cytoplasm. Functionally, as the regulatory component of the serine/threonine-protein phosphatase 2A (PP2A) holoenzyme, modulates substrate specificity, subcellular localization, and responsiveness to phosphorylation. The phosphorylated form mediates the interaction between PP2A and AKT1, leading to AKT1 dephosphorylation. This chain is Serine/threonine-protein phosphatase 2A 56 kDa regulatory subunit beta isoform (Ppp2r5b), found in Mus musculus (Mouse).